The following is a 25-amino-acid chain: Omega-conotoxin MVIIB (25 aa).

Intrachain disulfides connect C1–C16, C8–C20, and C15–C25. Residue C25 is modified to Cysteine amide.

The protein belongs to the conotoxin O1 superfamily. As to expression, expressed by the venom duct.

It is found in the secreted. In terms of biological role, omega-conotoxins act at presynaptic membranes, they bind and block voltage-gated calcium channels (Cav). The chain is Omega-conotoxin MVIIB from Conus magus (Magical cone).